A 73-amino-acid chain; its full sequence is Adipokinetic prohormone type 2 (73 aa).

The N-terminal stretch at 1–20 is a signal peptide; the sequence is MCRIFIVLLVVAALAIIIEG. Gln-21 carries the post-translational modification Pyrrolidone carboxylic acid. An Asparagine amide modification is found at Asn-30. Positions 34–73 are excised as a propeptide; it reads SISSEQINDDCNPEEAIFQIYKLIVSEGERIRACQRDGKM.

In terms of tissue distribution, expressed in corpora cardiaca (CC), corpora allata (CA) and gnathal ganglion (GNG) (at protein level). Expression in CC and CA detected in all animals, expression in GNG detected in few animals (at protein level). Not expressed in antennal lobe (AL) (at protein level).

Its subcellular location is the secreted. Functionally, this hormone, released from cells in the corpora cardiaca, causes release of diglycerides from the fat body and stimulation of muscles to use these diglycerides as an energy source during energy-demanding processes. In Agrotis ipsilon (Black cutworm moth), this protein is Adipokinetic prohormone type 2.